A 306-amino-acid polypeptide reads, in one-letter code: Embryogenic cell protein 40 (306 aa).

Disordered regions lie at residues 1 to 57 (MADL…ASHG), 80 to 171 (AATH…GGLG), and 188 to 306 (GTGI…PTSH). Polar residues predominate over residues 12-23 (IQLTDQHGNPVQ). Residues 32–44 (VHITGVATTGATT) are compositionally biased toward low complexity. 3 stretches are compositionally biased toward gly residues: residues 85–119 (GSHG…GTGT), 127–151 (GPTG…GTGV), and 159–171 (GPTG…GGLG). Positions 194 to 204 (GSAPASAGSHS) are enriched in low complexity. Composition is skewed to basic and acidic residues over residues 205-218 (HAPE…EQLH) and 243-259 (KIKE…DEHT). Residues 260–278 (TVATTKTTTAAHPGGAAVA) show a composition bias toward low complexity. Basic and acidic residues predominate over residues 279 to 298 (VEHHEHEKKSMLDKIKDKLP).

The protein belongs to the plant dehydrin family.

This chain is Embryogenic cell protein 40 (ECP40), found in Daucus carota (Wild carrot).